The chain runs to 273 residues: F-actin-capping protein subunit alpha (273 aa).

The protein belongs to the F-actin-capping protein alpha subunit family. As to quaternary structure, component of the F-actin capping complex, composed of a heterodimer of an alpha and a beta subunit.

The protein resides in the cytoplasm. The protein localises to the cytoskeleton. It is found in the actin patch. Its function is as follows. F-actin-capping proteins bind in a Ca(2+)-independent manner to the fast growing ends of actin filaments (barbed end) thereby blocking the exchange of subunits at these ends. Unlike other capping proteins (such as gelsolin and severin), these proteins do not sever actin filaments. This is F-actin-capping protein subunit alpha (fac-1) from Neurospora crassa (strain ATCC 24698 / 74-OR23-1A / CBS 708.71 / DSM 1257 / FGSC 987).